Here is a 199-residue protein sequence, read N- to C-terminus: Cytochrome b (199 aa).

4 helical membrane passes run 1 to 8 (LTGLFLAM), 32 to 53 (WLIR…YFHI), 68 to 88 (WNIG…GYVL), and 133 to 153 (FFAF…LHLL). Residues His38 and His52 each contribute to the heme b site. Heme b is bound by residues His137 and His151. Residue His156 coordinates a ubiquinone. Residues 181-199 (YKDLLGFAILLVALASLAH) form a helical membrane-spanning segment.

It belongs to the cytochrome b family. In terms of assembly, the cytochrome bc1 complex contains 3 respiratory subunits (MT-CYB, CYC1 and UQCRFS1), 2 core proteins (UQCRC1 and UQCRC2) and probably 6 low-molecular weight proteins. Heme b is required as a cofactor.

It localises to the mitochondrion inner membrane. Functionally, component of the ubiquinol-cytochrome c reductase complex (complex III or cytochrome b-c1 complex) that is part of the mitochondrial respiratory chain. The b-c1 complex mediates electron transfer from ubiquinol to cytochrome c. Contributes to the generation of a proton gradient across the mitochondrial membrane that is then used for ATP synthesis. This is Cytochrome b (mt-cyb) from Sarda chiliensis (Pacific bonito).